Reading from the N-terminus, the 519-residue chain is tRNA-2-methylthio-N(6)-dimethylallyladenosine synthase (519 aa).

The segment at 1–23 (MNEQQRKQQSQIRTEQANVDRIK) is disordered. Residues 7 to 17 (KQQSQIRTEQA) are compositionally biased toward polar residues. The MTTase N-terminal domain occupies 76-194 (KKFLIRTYGC…LPHLVKEALF (119 aa)). 6 residues coordinate [4Fe-4S] cluster: cysteine 85, cysteine 121, cysteine 155, cysteine 231, cysteine 235, and cysteine 238. The Radical SAM core domain occupies 217-450 (RKGKIKAWVN…VNKQSAASMK (234 aa)). A TRAM domain is found at 450-513 (KDYAGKKVKV…TWSLNGVMVE (64 aa)).

It belongs to the methylthiotransferase family. MiaB subfamily. In terms of assembly, monomer. Requires [4Fe-4S] cluster as cofactor.

Its subcellular location is the cytoplasm. It carries out the reaction N(6)-dimethylallyladenosine(37) in tRNA + (sulfur carrier)-SH + AH2 + 2 S-adenosyl-L-methionine = 2-methylsulfanyl-N(6)-dimethylallyladenosine(37) in tRNA + (sulfur carrier)-H + 5'-deoxyadenosine + L-methionine + A + S-adenosyl-L-homocysteine + 2 H(+). Its function is as follows. Catalyzes the methylthiolation of N6-(dimethylallyl)adenosine (i(6)A), leading to the formation of 2-methylthio-N6-(dimethylallyl)adenosine (ms(2)i(6)A) at position 37 in tRNAs that read codons beginning with uridine. This is tRNA-2-methylthio-N(6)-dimethylallyladenosine synthase from Oceanobacillus iheyensis (strain DSM 14371 / CIP 107618 / JCM 11309 / KCTC 3954 / HTE831).